A 351-amino-acid chain; its full sequence is Methionine import ATP-binding protein MetN (351 aa).

Residues 4–249 form the ABC transporter domain; it reads VQLDHVSVTF…PKAELTQKFV (246 aa). 41 to 48 contacts ATP; the sequence is GFSGAGKS.

The protein belongs to the ABC transporter superfamily. Methionine importer (TC 3.A.1.24) family. As to quaternary structure, the complex is composed of two ATP-binding proteins (MetN), two transmembrane proteins (MetI) and a solute-binding protein (MetQ).

The protein resides in the cell membrane. It catalyses the reaction L-methionine(out) + ATP + H2O = L-methionine(in) + ADP + phosphate + H(+). It carries out the reaction D-methionine(out) + ATP + H2O = D-methionine(in) + ADP + phosphate + H(+). In terms of biological role, part of the ABC transporter complex MetNIQ involved in methionine import. Responsible for energy coupling to the transport system. The chain is Methionine import ATP-binding protein MetN from Lactobacillus delbrueckii subsp. bulgaricus (strain ATCC 11842 / DSM 20081 / BCRC 10696 / JCM 1002 / NBRC 13953 / NCIMB 11778 / NCTC 12712 / WDCM 00102 / Lb 14).